Reading from the N-terminus, the 127-residue chain is uncharacterized protein (127 aa).

3 helical membrane passes run 16-36, 59-79, and 100-120; these read AVIG…CYVI, LVGA…SFLF, and IIGF…GGVI.

The protein resides in the cell membrane. This is an uncharacterized protein from Methanocaldococcus jannaschii (strain ATCC 43067 / DSM 2661 / JAL-1 / JCM 10045 / NBRC 100440) (Methanococcus jannaschii).